A 292-amino-acid chain; its full sequence is Ribosomal protein L11 methyltransferase (292 aa).

S-adenosyl-L-methionine is bound by residues T136, G159, D181, and N228.

This sequence belongs to the methyltransferase superfamily. PrmA family.

It is found in the cytoplasm. The enzyme catalyses L-lysyl-[protein] + 3 S-adenosyl-L-methionine = N(6),N(6),N(6)-trimethyl-L-lysyl-[protein] + 3 S-adenosyl-L-homocysteine + 3 H(+). Functionally, methylates ribosomal protein L11. The protein is Ribosomal protein L11 methyltransferase of Rhizobium etli (strain CIAT 652).